Reading from the N-terminus, the 161-residue chain is SsrA-binding protein (161 aa).

The protein belongs to the SmpB family.

It is found in the cytoplasm. Required for rescue of stalled ribosomes mediated by trans-translation. Binds to transfer-messenger RNA (tmRNA), required for stable association of tmRNA with ribosomes. tmRNA and SmpB together mimic tRNA shape, replacing the anticodon stem-loop with SmpB. tmRNA is encoded by the ssrA gene; the 2 termini fold to resemble tRNA(Ala) and it encodes a 'tag peptide', a short internal open reading frame. During trans-translation Ala-aminoacylated tmRNA acts like a tRNA, entering the A-site of stalled ribosomes, displacing the stalled mRNA. The ribosome then switches to translate the ORF on the tmRNA; the nascent peptide is terminated with the 'tag peptide' encoded by the tmRNA and targeted for degradation. The ribosome is freed to recommence translation, which seems to be the essential function of trans-translation. The sequence is that of SsrA-binding protein from Vibrio parahaemolyticus serotype O3:K6 (strain RIMD 2210633).